Here is a 410-residue protein sequence, read N- to C-terminus: MKIMSVNSGSSSLKFQLLEMPQQEVIVSGLVERIGSNQAVFTMKTKDKKDKQVLEVLNHQTAVELLLDALIQKKVINTLEEIEGVGHRVVQGGEIFSDSAVLTEKTLAQIESLCDLAPLHNPANIISIKAFQKVLPQVFQVAVFDTTFHQSMPAVNFLYAAPYYWYQKYQIRKYGAHGTSYKYITEQMQQILGKKNAKIIICHAGNGVSLCAVDSGKSVDTSMGFTPLEGVPMGTRSGNIDPAVVKFIAEKENKTVACVIDDLNKKSGYLGVSGISNDTRDILANIKEGNQQAILSHDIQVKRIVDYIASYYVLLKGVDALVFTAGIGENSSFFRSEIIKRLSVLGIKLDEEKNKVQGKQELITTFDSAIKAFVVPTNEELAIAQDVLRLQQNQTNQDKDDQQECFCCCG.

Asn-7 is a binding site for Mg(2+). An ATP-binding site is contributed by Lys-14. Position 88 (Arg-88) interacts with substrate. Asp-145 (proton donor/acceptor) is an active-site residue. ATP-binding positions include 203–207 (HAGNG), 278–280 (DTR), and 326–330 (GIGEN). Glu-379 provides a ligand contact to Mg(2+).

Belongs to the acetokinase family. Homodimer. Requires Mg(2+) as cofactor. The cofactor is Mn(2+).

Its subcellular location is the cytoplasm. The catalysed reaction is acetate + ATP = acetyl phosphate + ADP. It participates in metabolic intermediate biosynthesis; acetyl-CoA biosynthesis; acetyl-CoA from acetate: step 1/2. Its function is as follows. Catalyzes the formation of acetyl phosphate from acetate and ATP. Can also catalyze the reverse reaction. The chain is Acetate kinase from Onion yellows phytoplasma (strain OY-M).